Consider the following 512-residue polypeptide: 2-isopropylmalate synthase (512 aa).

Positions 5–268 (LIIFDTTLRD…DIGIDTQQIL (264 aa)) constitute a Pyruvate carboxyltransferase domain. Positions 14, 202, 204, and 239 each coordinate Mn(2+). The interval 394–512 (GFVSLSQHSE…SKADRVAAQG (119 aa)) is regulatory domain.

The protein belongs to the alpha-IPM synthase/homocitrate synthase family. LeuA type 1 subfamily. Homodimer. Requires Mn(2+) as cofactor.

It localises to the cytoplasm. It catalyses the reaction 3-methyl-2-oxobutanoate + acetyl-CoA + H2O = (2S)-2-isopropylmalate + CoA + H(+). It functions in the pathway amino-acid biosynthesis; L-leucine biosynthesis; L-leucine from 3-methyl-2-oxobutanoate: step 1/4. Catalyzes the condensation of the acetyl group of acetyl-CoA with 3-methyl-2-oxobutanoate (2-ketoisovalerate) to form 3-carboxy-3-hydroxy-4-methylpentanoate (2-isopropylmalate). The protein is 2-isopropylmalate synthase of Polaromonas naphthalenivorans (strain CJ2).